Consider the following 337-residue polypeptide: Ketol-acid reductoisomerase (NADP(+)) (337 aa).

One can recognise a KARI N-terminal Rossmann domain in the interval 3–183 (VEMFYDDDAD…GGARAGVIKT (181 aa)). NADP(+) contacts are provided by residues 26-29 (YGSQ), Lys49, Ser52, Ser54, and 84-87 (DTAQ). The active site involves His109. Gly135 provides a ligand contact to NADP(+). Residues 184–329 (TFKEETETDL…KKLRDLMSWV (146 aa)) enclose the KARI C-terminal knotted domain. The Mg(2+) site is built by Asp192, Glu196, Glu228, and Glu232. Ser253 is a substrate binding site.

Belongs to the ketol-acid reductoisomerase family. The cofactor is Mg(2+).

The enzyme catalyses (2R)-2,3-dihydroxy-3-methylbutanoate + NADP(+) = (2S)-2-acetolactate + NADPH + H(+). It catalyses the reaction (2R,3R)-2,3-dihydroxy-3-methylpentanoate + NADP(+) = (S)-2-ethyl-2-hydroxy-3-oxobutanoate + NADPH + H(+). Its pathway is amino-acid biosynthesis; L-isoleucine biosynthesis; L-isoleucine from 2-oxobutanoate: step 2/4. It functions in the pathway amino-acid biosynthesis; L-valine biosynthesis; L-valine from pyruvate: step 2/4. In terms of biological role, involved in the biosynthesis of branched-chain amino acids (BCAA). Catalyzes an alkyl-migration followed by a ketol-acid reduction of (S)-2-acetolactate (S2AL) to yield (R)-2,3-dihydroxy-isovalerate. In the isomerase reaction, S2AL is rearranged via a Mg-dependent methyl migration to produce 3-hydroxy-3-methyl-2-ketobutyrate (HMKB). In the reductase reaction, this 2-ketoacid undergoes a metal-dependent reduction by NADPH to yield (R)-2,3-dihydroxy-isovalerate. This chain is Ketol-acid reductoisomerase (NADP(+)), found in Rhodococcus opacus (strain B4).